The following is a 318-amino-acid chain: DNA repair nuclease/redox regulator APEX1 (318 aa).

A necessary for interaction with YBX1, binding to RNA, association together with NPM1 to rRNA, endoribonuclease activity on abasic RNA and localization in the nucleoli region spans residues 1 to 33 (MPKRGKKGAVAEDGDELRTEPEAKKSKTAAKKN). A disordered region spans residues 1–60 (MPKRGKKGAVAEDGDELRTEPEAKKSKTAAKKNDKEAAGEGPALYEDPPDQKTSPSGKPA). Lys-6 and Lys-7 each carry N6-acetyllysine; by EP300. The Nuclear localization signal (NLS) signature appears at 8-13 (GAVAED). The span at 16–38 (ELRTEPEAKKSKTAAKKNDKEAA) shows a compositional bias: basic and acidic residues. Residues 23–33 (AKKSKTAAKKN) are necessary for interaction with NPM1 and for efficient rRNA binding. Residues Lys-27, Lys-31, Lys-32, and Lys-35 each carry the N6-acetyllysine modification. Phosphoserine is present on Ser-54. The short motif at 64–80 (ICSWNVDGLRAWIKKKG) is the Nuclear export signal (NES) element. S-nitrosocysteine; alternate is present on Cys-65. Cys-65 and Cys-93 are oxidised to a cystine. Asp-70 contacts Mg(2+). Position 93 is an S-nitrosocysteine; alternate (Cys-93). Glu-96 is a Mg(2+) binding site. Tyr-171 is a catalytic residue. Residue Lys-197 is modified to N6-acetyllysine. Residues Asp-210 and Asn-212 each contribute to the Mg(2+) site. The Proton donor/acceptor role is filled by Asp-210. Position 233 is a phosphothreonine; by CDK5 (Thr-233). A mitochondrial targeting sequence (MTS) region spans residues 289 to 318 (HSLLPALCDSKIRSKALGSDHCPITLYLAL). Asp-308 lines the Mg(2+) pocket. Cys-310 is subject to S-nitrosocysteine.

The protein belongs to the DNA repair enzymes AP/ExoA family. As to quaternary structure, monomer. Homodimer; disulfide-linked. Component of the SET complex, composed of at least APEX1, SET, ANP32A, HMGB2, NME1 and TREX1. Associates with the dimer XRCC5/XRCC6 in a DNA-dependent manner. Interacts with SIRT1; the interaction is increased in the context of genotoxic stress. Interacts with HDAC1, HDAC2 and HDAC3; the interactions are not dependent on the APEX1 acetylation status. Interacts with XRCC1; the interaction is induced by SIRT1 and increased with the APEX1 acetylated form. Interacts with NPM1 (via N-terminal domain); the interaction is RNA-dependent and decreases in hydrogen peroxide-damaged cells. Interacts (via N-terminus) with YBX1 (via C-terminus); the interaction is increased in presence of APEX1 acetylated at Lys-6 and Lys-7. Interacts with HNRNPL; the interaction is DNA-dependent. Interacts (via N-terminus) with KPNA1 and KPNA2. Interacts with TXN; the interaction stimulates the FOS/JUN AP-1 complex DNA-binding activity in a redox-dependent manner. Interacts with GZMA, KRT8, MDM2, POLB, PRDX6, PRPF19, RPLP0, TOMM20 and WDR77. Binds to CDK5. It depends on Mg(2+) as a cofactor. Mn(2+) is required as a cofactor. Post-translationally, phosphorylated. Phosphorylation by kinase PKC or casein kinase CK2 results in enhanced redox activity that stimulates binding of the FOS/JUN AP-1 complex to its cognate binding site. AP-endodeoxyribonuclease activity is not affected by CK2-mediated phosphorylation. Phosphorylation of Thr-233 by CDK5 in response to MPP(+)/MPTP (1-methyl-4-phenylpyridinium) reduces AP-endodeoxyribonuclease activity resulting in accumulation of DNA damage and contributing to neuronal death. Acetylated on Lys-6 and Lys-7. Acetylation is increased by the transcriptional coactivator EP300 acetyltransferase, genotoxic agents like H(2)O(2) and methyl methanesulfonate (MMS). Acetylation increases its binding affinity to the negative calcium response element (nCaRE) DNA promoter. The acetylated form induces a stronger binding of YBX1 to the Y-box sequence in the MDR1 promoter than the unacetylated form. Deacetylated on lysines. Lys-6 and Lys-7 are deacetylated by SIRT1. In terms of processing, cleaved at Lys-31 by granzyme A to create the mitochondrial form; leading in reduction of binding to DNA, AP endodeoxyribonuclease activity, redox activation of transcription factors and to enhanced cell death. Cleaved by granzyme K; leading to intracellular ROS accumulation and enhanced cell death after oxidative stress. Post-translationally, cys-69 and Cys-93 are nitrosylated in response to nitric oxide (NO) and lead to the exposure of the nuclear export signal (NES). Ubiquitinated by MDM2; leading to translocation to the cytoplasm and proteasomal degradation.

It localises to the nucleus. It is found in the nucleolus. The protein localises to the nucleus speckle. Its subcellular location is the endoplasmic reticulum. The protein resides in the cytoplasm. It localises to the mitochondrion. It carries out the reaction a deoxyribonucleotide-2'-deoxyribose-5'-monophosphate-DNA + H2O = a 5'-end 2'-deoxyribose-5'-monophosphate-DNA + a 3'-end 2'-deoxyribonucleotide-DNA + H(+). It catalyses the reaction Exonucleolytic cleavage in the 3'- to 5'-direction to yield nucleoside 5'-phosphates.. The catalysed reaction is a 3'-end 2'-deoxyribonucleotide-3'-phosphoglycolate-DNA + H2O = 2-phosphoglycolate + a 3'-end 2'-deoxyribonucleotide-DNA + H(+). The enzyme catalyses a 3'-end 2'-deoxyribonucleotide-8-oxoguanine-DNA + H2O = 8-oxo-dGMP + a 3'-end 2'-deoxyribonucleotide-DNA + H(+). Its activity is regulated as follows. NPM1 stimulates endodeoxyribonuclease activity on double-stranded DNA with AP sites, but inhibits endoribonuclease activity on single-stranded RNA containing AP sites. Functionally, multifunctional protein that plays a central role in the cellular response to oxidative stress. The two major activities of APEX1 are DNA repair and redox regulation of transcriptional factors. Functions as an apurinic/apyrimidinic (AP) endodeoxyribonuclease in the base excision repair (BER) pathway of DNA lesions induced by oxidative and alkylating agents. Initiates repair of AP sites in DNA by catalyzing hydrolytic incision of the phosphodiester backbone immediately adjacent to the damage, generating a single-strand break with 5'-deoxyribose phosphate and 3'-hydroxyl ends. Also incises at AP sites in the DNA strand of DNA/RNA hybrids, single-stranded DNA regions of R-loop structures, and single-stranded RNA molecules. Operates at switch sites of immunoglobulin (Ig) constant regions where it mediates Ig isotype class switch recombination. Processes AP sites induced by successive action of AICDA and UNG. Generates staggered nicks in opposite DNA strands resulting in the formation of double-strand DNA breaks that are finally resolved via non-homologous end joining repair pathway. Has 3'-5' exodeoxyribonuclease activity on mismatched deoxyribonucleotides at the 3' termini of nicked or gapped DNA molecules during short-patch BER. Possesses DNA 3' phosphodiesterase activity capable of removing lesions (such as phosphoglycolate and 8-oxoguanine) blocking the 3' side of DNA strand breaks. Also acts as an endoribonuclease involved in the control of single-stranded RNA metabolism. Plays a role in regulating MYC mRNA turnover by preferentially cleaving in between UA and CA dinucleotides of the MYC coding region determinant (CRD). In association with NMD1, plays a role in the rRNA quality control process during cell cycle progression. Acts as a loading factor for POLB onto non-incised AP sites in DNA and stimulates the 5'-terminal deoxyribose 5'-phosphate (dRp) excision activity of POLB. Exerts reversible nuclear redox activity to regulate DNA binding affinity and transcriptional activity of transcriptional factors by controlling the redox status of their DNA-binding domain, such as the FOS/JUN AP-1 complex after exposure to IR. Involved in calcium-dependent down-regulation of parathyroid hormone (PTH) expression by binding to negative calcium response elements (nCaREs). Together with HNRNPL or the dimer XRCC5/XRCC6, associates with nCaRE, acting as an activator of transcriptional repression. May also play a role in the epigenetic regulation of gene expression by participating in DNA demethylation. Stimulates the YBX1-mediated MDR1 promoter activity, when acetylated at Lys-6 and Lys-7, leading to drug resistance. Plays a role in protection from granzyme-mediated cellular repair leading to cell death. Binds DNA and RNA. Associates, together with YBX1, on the MDR1 promoter. Together with NPM1, associates with rRNA. The protein is DNA repair nuclease/redox regulator APEX1 (APEX1) of Pan paniscus (Pygmy chimpanzee).